Reading from the N-terminus, the 193-residue chain is MTDYLLLLVGTVLVNNFVLVKFLGLCPFMGVSKKLETAMGMGLATTFVLTLASVCAWAVNQFILVPLGLAYLRTLTFILVIAVVVQFTELAVRKTSPMLYRLLGIFLPLITTNCAVLGVALLNVNQSHNFLQSAVYGFSAAVGFSLVMVLFAAIRERLALADVPAPFRGASIALITAGLMSLAFMGFSGLVKF.

6 consecutive transmembrane segments (helical) span residues 5-25, 39-59, 62-82, 102-122, 134-154, and 171-191; these read LLLL…FLGL, MGMG…AWAV, FILV…LVIA, LLGI…VALL, AVYG…FAAI, and SIAL…SGLV.

The protein belongs to the NqrDE/RnfAE family. In terms of assembly, the complex is composed of six subunits: RnfA, RnfB, RnfC, RnfD, RnfE and RnfG.

It localises to the cell inner membrane. In terms of biological role, part of a membrane-bound complex that couples electron transfer with translocation of ions across the membrane. The chain is Ion-translocating oxidoreductase complex subunit A from Edwardsiella ictaluri (strain 93-146).